A 258-amino-acid chain; its full sequence is NH(3)-dependent NAD(+) synthetase (258 aa).

Residue 34 to 41 coordinates ATP; that stretch reads GLSGGIDS. Asp40 is a binding site for Mg(2+). Position 116 (Arg116) interacts with deamido-NAD(+). Thr136 contacts ATP. Glu141 provides a ligand contact to Mg(2+). 2 residues coordinate ATP: Lys165 and Ser187.

It belongs to the NAD synthetase family. Homodimer.

It catalyses the reaction deamido-NAD(+) + NH4(+) + ATP = AMP + diphosphate + NAD(+) + H(+). It functions in the pathway cofactor biosynthesis; NAD(+) biosynthesis; NAD(+) from deamido-NAD(+) (ammonia route): step 1/1. Catalyzes the ATP-dependent amidation of deamido-NAD to form NAD. Uses ammonia as a nitrogen source. In Fusobacterium nucleatum subsp. nucleatum (strain ATCC 25586 / DSM 15643 / BCRC 10681 / CIP 101130 / JCM 8532 / KCTC 2640 / LMG 13131 / VPI 4355), this protein is NH(3)-dependent NAD(+) synthetase.